Here is a 37-residue protein sequence, read N- to C-terminus: Large ribosomal subunit protein bL36 (37 aa).

The protein belongs to the bacterial ribosomal protein bL36 family.

The chain is Large ribosomal subunit protein bL36 from Aliivibrio fischeri (strain ATCC 700601 / ES114) (Vibrio fischeri).